The chain runs to 126 residues: Histone H2B type 2-E (126 aa).

Over residues 1-12 (MPEPAKSAPAPK) the composition is skewed to low complexity. The tract at residues 1-35 (MPEPAKSAPAPKKGSKKAVTKAQKKDGKKRKRSRK) is disordered. Pro-2 is subject to N-acetylproline. The residue at position 3 (Glu-3) is an ADP-ribosyl glutamic acid. Lys-6 carries the post-translational modification N6-(2-hydroxyisobutyryl)lysine; alternate. Position 6 is an N6-(beta-hydroxybutyryl)lysine; alternate (Lys-6). An N6-acetyllysine; alternate modification is found at Lys-6. Position 6 is an N6-butyryllysine; alternate (Lys-6). N6-crotonyllysine; alternate is present on Lys-6. N6-lactoyllysine; alternate is present on Lys-6. Lys-6 is covalently cross-linked (Glycyl lysine isopeptide (Lys-Gly) (interchain with G-Cter in SUMO2); alternate). Ser-7 is modified (ADP-ribosylserine). At Lys-12 the chain carries N6-(beta-hydroxybutyryl)lysine; alternate. 2 positions are modified to N6-acetyllysine; alternate: Lys-12 and Lys-13. N6-crotonyllysine; alternate is present on residues Lys-12 and Lys-13. N6-lactoyllysine; alternate is present on Lys-12. Position 13 is an N6-(2-hydroxyisobutyryl)lysine; alternate (Lys-13). Ser-15 is modified (phosphoserine; by STK4/MST1). Lys-16, Lys-17, Lys-21, and Lys-24 each carry N6-acetyllysine; alternate. An N6-crotonyllysine; alternate mark is found at Lys-16, Lys-17, Lys-21, and Lys-24. An N6-lactoyllysine; alternate mark is found at Lys-16, Lys-17, Lys-21, and Lys-24. Residues Lys-17 and Lys-21 each carry the N6-(beta-hydroxybutyryl)lysine; alternate modification. Residue Lys-17 is modified to N6-glutaryllysine; alternate. Residues Lys-21 and Lys-24 each carry the N6-(2-hydroxyisobutyryl)lysine; alternate modification. An N6-butyryllysine; alternate modification is found at Lys-21. Lys-21 is covalently cross-linked (Glycyl lysine isopeptide (Lys-Gly) (interchain with G-Cter in SUMO2); alternate). Residue Lys-25 is modified to N6-(2-hydroxyisobutyryl)lysine. At Lys-35 the chain carries N6-(2-hydroxyisobutyryl)lysine; alternate. Lys-35 is subject to N6-(beta-hydroxybutyryl)lysine; alternate. Lys-35 is subject to N6-crotonyllysine; alternate. Lys-35 carries the post-translational modification N6-glutaryllysine; alternate. Lys-35 carries the post-translational modification N6-succinyllysine; alternate. Residue Lys-35 forms a Glycyl lysine isopeptide (Lys-Gly) (interchain with G-Cter in ubiquitin); alternate linkage. Glu-36 bears the PolyADP-ribosyl glutamic acid mark. Position 37 is a phosphoserine; by AMPK (Ser-37). 3 positions are modified to N6-(2-hydroxyisobutyryl)lysine; alternate: Lys-44, Lys-47, and Lys-58. Lys-44 carries the N6-lactoyllysine; alternate modification. N6-glutaryllysine; alternate occurs at positions 44 and 47. An N6-methyllysine; alternate modification is found at Lys-47. Lys-58 carries the post-translational modification N6,N6-dimethyllysine; alternate. A Dimethylated arginine modification is found at Arg-80. Lys-86 carries the post-translational modification N6-(2-hydroxyisobutyryl)lysine; alternate. An N6-(beta-hydroxybutyryl)lysine; alternate modification is found at Lys-86. Residue Lys-86 is modified to N6-acetyllysine; alternate. Residue Lys-86 is modified to N6-lactoyllysine; alternate. Lys-86 carries the N6,N6,N6-trimethyllysine; alternate modification. Omega-N-methylarginine is present on residues Arg-87 and Arg-93. Position 109 is an N6-(2-hydroxyisobutyryl)lysine; alternate (Lys-109). Residue Lys-109 is modified to N6-lactoyllysine; alternate. The residue at position 109 (Lys-109) is an N6-glutaryllysine; alternate. At Lys-109 the chain carries N6-methyllysine; alternate. Ser-113 is a glycosylation site (O-linked (GlcNAc) serine). Thr-116 carries the post-translational modification Phosphothreonine. 2 positions are modified to N6-(2-hydroxyisobutyryl)lysine; alternate: Lys-117 and Lys-121. An N6-(beta-hydroxybutyryl)lysine; alternate mark is found at Lys-117 and Lys-121. Residues Lys-117 and Lys-121 each carry the N6-lactoyllysine; alternate modification. N6-glutaryllysine; alternate occurs at positions 117 and 121. An N6-succinyllysine; alternate mark is found at Lys-117 and Lys-121. Residue Lys-117 is modified to N6-malonyllysine; alternate. The residue at position 117 (Lys-117) is an N6-methylated lysine; alternate. Lys-121 participates in a covalent cross-link: Glycyl lysine isopeptide (Lys-Gly) (interchain with G-Cter in ubiquitin); alternate.

The protein belongs to the histone H2B family. As to quaternary structure, the nucleosome is a histone octamer containing two molecules each of H2A, H2B, H3 and H4 assembled in one H3-H4 heterotetramer and two H2A-H2B heterodimers. The octamer wraps approximately 147 bp of DNA. In terms of processing, monoubiquitination at Lys-35 (H2BK34Ub) by the MSL1/MSL2 dimer is required for histone H3 'Lys-4' (H3K4me) and 'Lys-79' (H3K79me) methylation and transcription activation at specific gene loci, such as HOXA9 and MEIS1 loci. Similarly, monoubiquitination at Lys-121 (H2BK120Ub) by the RNF20/40 complex gives a specific tag for epigenetic transcriptional activation and is also prerequisite for histone H3 'Lys-4' and 'Lys-79' methylation. It also functions cooperatively with the FACT dimer to stimulate elongation by RNA polymerase II. H2BK120Ub also acts as a regulator of mRNA splicing: deubiquitination by USP49 is required for efficient cotranscriptional splicing of a large set of exons. Post-translationally, phosphorylation at Ser-37 (H2BS36ph) by AMPK in response to stress promotes transcription. Phosphorylated on Ser-15 (H2BS14ph) by STK4/MST1 during apoptosis; which facilitates apoptotic chromatin condensation. Also phosphorylated on Ser-15 in response to DNA double strand breaks (DSBs), and in correlation with somatic hypermutation and immunoglobulin class-switch recombination. GlcNAcylation at Ser-113 promotes monoubiquitination of Lys-121. It fluctuates in response to extracellular glucose, and associates with transcribed genes. In terms of processing, ADP-ribosylated by PARP1 or PARP2 on Ser-7 (H2BS6ADPr) in response to DNA damage. H2BS6ADPr promotes recruitment of CHD1L. Mono-ADP-ribosylated on Glu-3 (H2BE2ADPr) by PARP3 in response to single-strand breaks. Poly ADP-ribosylation on Glu-36 (H2BE35ADPr) by PARP1 regulates adipogenesis: it inhibits phosphorylation at Ser-37 (H2BS36ph), thereby blocking expression of pro-adipogenetic genes. Post-translationally, crotonylation (Kcr) is specifically present in male germ cells and marks testis-specific genes in post-meiotic cells, including X-linked genes that escape sex chromosome inactivation in haploid cells. Crotonylation marks active promoters and enhancers and confers resistance to transcriptional repressors. It is also associated with post-meiotically activated genes on autosomes. Lactylated in macrophages by EP300/P300 by using lactoyl-CoA directly derived from endogenous or exogenous lactate, leading to stimulates gene transcription.

The protein localises to the nucleus. Its subcellular location is the chromosome. Its function is as follows. Core component of nucleosome. Nucleosomes wrap and compact DNA into chromatin, limiting DNA accessibility to the cellular machineries which require DNA as a template. Histones thereby play a central role in transcription regulation, DNA repair, DNA replication and chromosomal stability. DNA accessibility is regulated via a complex set of post-translational modifications of histones, also called histone code, and nucleosome remodeling. Has broad antibacterial activity. May contribute to the formation of the functional antimicrobial barrier of the colonic epithelium, and to the bactericidal activity of amniotic fluid. The polypeptide is Histone H2B type 2-E (Homo sapiens (Human)).